A 207-amino-acid polypeptide reads, in one-letter code: Nucleoplasmin-2 (207 aa).

Residues 1–15 (MSRHSTSSVTETTAK) show a composition bias toward polar residues. Disordered regions lie at residues 1 to 20 (MSRH…MLWG) and 121 to 207 (DLTW…VTKK). The segment covering 123-147 (TWEDDEEEEEEEEEEDEDEDADISL) has biased composition (acidic residues). The interval 129–152 (EEEEEEEEEDEDEDADISLEEIPV) is acidic tract A2. Positions 165 to 180 (SIAKKKKVEKEEDETV) match the Bipartite nuclear localization signal motif. Basic residues predominate over residues 198 to 207 (PRAKKPVTKK).

Belongs to the nucleoplasmin family. Homopentamer, when bound to H2A-H2B dimers only. Homodecamer of two stacked pentamers, when bound to H2A-H2B dimers and H3-H4 tetramers simultaneously. As to expression, ovary specific.

It localises to the nucleus. In terms of biological role, core histones chaperone involved in chromatin reprogramming, specially during fertilization and early embryonic development. Probably involved in sperm DNA decondensation during fertilization. The polypeptide is Nucleoplasmin-2 (Npm2) (Mus musculus (Mouse)).